Here is a 273-residue protein sequence, read N- to C-terminus: Formamidopyrimidine-DNA glycosylase (273 aa).

Proline 2 serves as the catalytic Schiff-base intermediate with DNA. Glutamate 3 serves as the catalytic Proton donor. Lysine 60 (proton donor; for beta-elimination activity) is an active-site residue. DNA-binding residues include histidine 94, arginine 113, and lysine 154. The FPG-type zinc finger occupies 239-273 (EAYGRTGEPCRRCGTPIERIVVAQRSTHICPVCQA). Catalysis depends on arginine 263, which acts as the Proton donor; for delta-elimination activity.

It belongs to the FPG family. In terms of assembly, monomer. Requires Zn(2+) as cofactor.

The catalysed reaction is Hydrolysis of DNA containing ring-opened 7-methylguanine residues, releasing 2,6-diamino-4-hydroxy-5-(N-methyl)formamidopyrimidine.. It catalyses the reaction 2'-deoxyribonucleotide-(2'-deoxyribose 5'-phosphate)-2'-deoxyribonucleotide-DNA = a 3'-end 2'-deoxyribonucleotide-(2,3-dehydro-2,3-deoxyribose 5'-phosphate)-DNA + a 5'-end 5'-phospho-2'-deoxyribonucleoside-DNA + H(+). Its function is as follows. Involved in base excision repair of DNA damaged by oxidation or by mutagenic agents. Acts as a DNA glycosylase that recognizes and removes damaged bases. Has a preference for oxidized purines, such as 7,8-dihydro-8-oxoguanine (8-oxoG). Has AP (apurinic/apyrimidinic) lyase activity and introduces nicks in the DNA strand. Cleaves the DNA backbone by beta-delta elimination to generate a single-strand break at the site of the removed base with both 3'- and 5'-phosphates. This chain is Formamidopyrimidine-DNA glycosylase, found in Herpetosiphon aurantiacus (strain ATCC 23779 / DSM 785 / 114-95).